A 229-amino-acid chain; its full sequence is MYLRKISAPLMTMLLLNGCAYIPHKPLVDGTTSAQPAPASAPLPNGSIFQTVQPMNYGYQPLFEDRRPRNIGDTLTITLQENVSASKSSSANASRNGTSSFGVTTAPRYLDGLLGNGRADMEITGDNTFGGKGGANANNTFSGTITVTVDQVLANGNLHVVGEKQIAINQGTEFIRFSGVVNPRTISGSNSVTSTQVADARIEYVGNGYINEAQTMGWLQRFFLNVSPY.

The signal sequence occupies residues methionine 1–glycine 18. Cysteine 19 carries the N-palmitoyl cysteine lipid modification. Cysteine 19 is lipidated: S-diacylglycerol cysteine.

The protein belongs to the FlgH family. As to quaternary structure, the basal body constitutes a major portion of the flagellar organelle and consists of four rings (L,P,S, and M) mounted on a central rod.

It is found in the cell outer membrane. The protein localises to the bacterial flagellum basal body. Functionally, assembles around the rod to form the L-ring and probably protects the motor/basal body from shearing forces during rotation. This chain is Flagellar L-ring protein 1 (flgH1), found in Yersinia pseudotuberculosis serotype I (strain IP32953).